The chain runs to 482 residues: Auxin transporter-like protein 2 (482 aa).

Residues 1 to 58 (MVPAGDQAEEAIVADAGKEEAEVRAAMGVEQDGKFSMTSLLWHGGSVWDAWFSCASNQ) lie on the Cytoplasmic side of the membrane. Residues 59–76 (VAQVLLTLPYSFSQLGML) form a helical membrane-spanning segment. Over 77–78 (SG) the chain is Extracellular. Residues 79-99 (LLLQVFYGLMGSWTAYLISVL) form a helical membrane-spanning segment. Topologically, residues 100-134 (YVEYRARKEKEGVSFKNHVIQWFEVLDGLLGPYWK) are cytoplasmic. The chain crosses the membrane as a helical span at residues 135 to 155 (AAGLAFNCTFLLFGSVIQLIA). The Extracellular portion of the chain corresponds to 156–171 (CASNIYYINDRLDKRT). A helical transmembrane segment spans residues 172–192 (WTYIFGACCSTTVFIPSFHNY). Arg-193 is a topological domain (cytoplasmic). Residues 194-214 (IWSFLGLGMTTYTAWYLAIAA) form a helical membrane-spanning segment. Over 215 to 231 (AVHGQVDGVTHSGPSKM) the chain is Extracellular. The chain crosses the membrane as a helical span at residues 232–252 (VLYFTGATNILYTFGGHAVTV). The Cytoplasmic portion of the chain corresponds to 253–265 (EIMHAMWKPQKFK). The helical transmembrane segment at 266–286 (YIYLVATLYVFTLTLPSASAM) threads the bilayer. The Extracellular portion of the chain corresponds to 287–313 (YWAFGDALLTHSNAFSLLPRSGWRDAA). Residues 314–334 (VILMLIHQFITFGFACTPLYF) form a helical membrane-spanning segment. At 335–355 (VWEKAIGMHGTRSVLTRALAR) the chain is on the cytoplasmic side. Residues 356 to 376 (LPIVVPIWFLAIIFPFFGPIN) form a helical membrane-spanning segment. Residue Ser-377 is a topological domain, extracellular. The chain crosses the membrane as a helical span at residues 378-398 (AVGALLVSFTVYIIPSLSHIL). Topologically, residues 399-423 (TYRSASARLNAAEKPPPFLPSWSGM) are cytoplasmic. A helical membrane pass occupies residues 424 to 444 (FVVNVFVVAWVLVVGFGLGGW). Residues 445-482 (ASVTNFIKQIDTFGLFAKCYQCPPRAHAGAPLPAPPRH) lie on the Extracellular side of the membrane.

It belongs to the amino acid/polyamine transporter 2 family. Amino acid/auxin permease (AAAP) (TC 2.A.18.1) subfamily.

The protein resides in the cell membrane. Its function is as follows. Carrier protein involved in proton-driven auxin influx. May mediate the formation of auxin gradient from developing leaves (site of auxin biosynthesis) to tips. The chain is Auxin transporter-like protein 2 from Oryza sativa subsp. japonica (Rice).